A 124-amino-acid chain; its full sequence is Magnetosome protein MamC (124 aa).

The Cytoplasmic segment spans residues Pro2 to Tyr8. The chain crosses the membrane as a helical span at residues Leu9–Leu29. Topologically, residues Ala30–Ser64 are lumenal. The interval Leu36–Gly56 is MIC, when fused with the C-terminus of maltose-binding protein (MBP) or expressed as a fragment, improves quality of iron particles during precipitation experiments, binds magnetite. A helical transmembrane segment spans residues Ala65–Ala85. Residues Gly86 to Ala124 are Cytoplasmic-facing.

This sequence belongs to the magnetosome MamC family. Probably interacts with MamA.

The protein localises to the magnetosome membrane. Functionally, probably involved in magnetite crystal growth. The lumenal domain may bind the magnetite crystals, affecting crystal size and shape. This chain is Magnetosome protein MamC, found in Paramagnetospirillum magneticum (strain ATCC 700264 / AMB-1) (Magnetospirillum magneticum).